The chain runs to 529 residues: Extracellular signal-regulated kinase 1 (529 aa).

Disordered regions lie at residues 1-20 and 100-131; these read MEPEFDHFQSQMDSDNTHQS and QQNQQQQSQQMTQQQLQQLMPPPPTSDTSNFN. The span at 8–20 shows a compositional bias: polar residues; that stretch reads FQSQMDSDNTHQS. A compositionally biased stretch (low complexity) spans 100 to 117; the sequence is QQNQQQQSQQMTQQQLQQ. One can recognise a Protein kinase domain in the interval 149–439; sequence YSIVKCIGHG…EALAHPYFQS (291 aa). ATP-binding positions include 155–163 and Lys178; that span reads IGHGAYGVV. The active-site Proton acceptor is the Asp275. Thr309 bears the Phosphothreonine mark. Residues 309-311 carry the TXY motif; the sequence is TEY. Tyr311 is subject to Phosphotyrosine.

This sequence belongs to the protein kinase superfamily. CMGC Ser/Thr protein kinase family. MAP kinase subfamily. Mg(2+) serves as cofactor. Dually phosphorylated on Thr-309 and Tyr-311, which activates the enzyme.

The catalysed reaction is L-seryl-[protein] + ATP = O-phospho-L-seryl-[protein] + ADP + H(+). The enzyme catalyses L-threonyl-[protein] + ATP = O-phospho-L-threonyl-[protein] + ADP + H(+). With respect to regulation, activated by tyrosine and threonine phosphorylation. Functionally, kinase involved in a signal transduction pathway. This is Extracellular signal-regulated kinase 1 (erkA) from Dictyostelium discoideum (Social amoeba).